The chain runs to 1311 residues: Suppressor of presenilin protein 4 (1311 aa).

The span at 1-11 (MSSEPTSSIES) shows a compositional bias: polar residues. Disordered regions lie at residues 1–58 (MSSE…DDLN) and 75–95 (MFED…STAH). 2 C2H2-type zinc fingers span residues 112–134 (HACH…TKMH) and 141–163 (FACE…NNIH). Residues 226–304 (EFDTTPPPIL…PPPVRKDVEK (79 aa)) form a disordered region. A compositionally biased stretch (low complexity) spans 280–293 (SPKGSLPSSSASSV). C2H2-type zinc fingers lie at residues 327-349 (QRCP…SGGH), 355-379 (YICP…YILH), 451-476 (KKCN…VKTH), and 487-510 (FLCL…LIEH). The interval 544–563 (VKEEPKEADGDESGDESFDS) is disordered. Residues 552 to 561 (DGDESGDESF) are compositionally biased toward acidic residues. 6 consecutive C2H2-type zinc fingers follow at residues 585–607 (FCCN…YDKH), 613–635 (FKCQ…EKLH), 709–731 (FQCT…KKRH), 737–759 (YRCV…LKQH), 794–816 (YCCD…HRNH), and 823–845 (NICS…TIIH). Residues 865-1002 (RPVSSLTDLN…ESPEPDESVE (138 aa)) are disordered. The segment covering 874–897 (NSEKMNERKSTKRKMLDKVEKMEV) has biased composition (basic and acidic residues). The segment covering 898–907 (GEDEEDDEES) has biased composition (acidic residues). Basic and acidic residues predominate over residues 908–920 (VDKGTDDGDYKQR). The segment covering 956-979 (NRINYSLLSKNGSGKPTPSTSSAN) has biased composition (polar residues). 6 consecutive C2H2-type zinc fingers follow at residues 1022–1044 (LKCP…RYYH), 1053–1075 (YACS…LKLH), 1104–1126 (YYCK…SAYH), 1162–1184 (KYCK…LDRH), 1190–1212 (YKCY…QLNH), and 1261–1284 (LKCP…SVHH).

As to expression, expressed in neurons.

Its subcellular location is the nucleus. Functionally, probable transcriptional regulator, which participates in the transcriptional repression of the presenilin protein hop-1. Might play a role in the oxidative stress response. In Caenorhabditis elegans, this protein is Suppressor of presenilin protein 4 (spr-4).